The primary structure comprises 89 residues: UPF0147 protein YN1551_1489 (89 aa).

The protein belongs to the UPF0147 family.

This Saccharolobus islandicus (strain Y.N.15.51 / Yellowstone #2) (Sulfolobus islandicus) protein is UPF0147 protein YN1551_1489.